The chain runs to 65 residues: Metallothionein-like protein type 3 (65 aa).

The protein belongs to the metallothionein superfamily. Type 15 family.

Its function is as follows. Metallothioneins have a high content of cysteine residues that bind various heavy metals. The chain is Metallothionein-like protein type 3 from Musa acuminata (Banana).